We begin with the raw amino-acid sequence, 274 residues long: NAD(P)H dehydrogenase [quinone] 1 (274 aa).

At alanine 2 the chain carries N-acetylalanine. Residues histidine 12, 18–19 (FN), and glutamine 67 each bind FAD. Phosphoserine is present on serine 82. 104-107 (LYWF) provides a ligand contact to FAD. 126-128 (AYT) lines the substrate pocket. FAD-binding positions include 148-151 (TTGG), tyrosine 156, and arginine 201. The interval 225–274 (PSSLFDLNFQAGFLLKKEVQEEQKKNKFGLSVGHHLGKSIPADNQIKARK) is important for apoenzyme conformational stability. Residue lysine 251 forms a Glycyl lysine isopeptide (Lys-Gly) (interchain with G-Cter in SUMO2) linkage.

It belongs to the NAD(P)H dehydrogenase (quinone) family. As to quaternary structure, homodimer. Interacts with PDLIM4 isoform 2; this interaction stabilizes PDLIM4 isoform 2 in response to oxidative stress and protects it from ubiquitin-independent degradation by the core 20S proteasome. Interacts with TP73 (via SAM domain); this interaction is NADH-dependent, stabilizes TP73 in response to oxidative stress and protects it from ubiquitin-independent degradation by the 20S proteasome. Interacts with TP53; this interaction is NADH-dependent, stabilizes TP53 in response to oxidative stress and protects it from ubiquitin-independent degradation by the 20S proteasome. Requires FAD as cofactor.

Its subcellular location is the cytoplasm. The protein resides in the cytosol. The enzyme catalyses a quinone + NADH + H(+) = a quinol + NAD(+). It carries out the reaction a quinone + NADPH + H(+) = a quinol + NADP(+). It catalyses the reaction ubiquinone-10 + NADH + H(+) = ubiquinol-10 + NAD(+). The catalysed reaction is menadione + NADH + H(+) = menadiol + NAD(+). Flavin-containing quinone reductase that catalyzes two-electron reduction of quinones to hydroquinones using either NADH or NADPH as electron donors. In a ping-pong kinetic mechanism, the electrons are sequentially transferred from NAD(P)H to flavin cofactor and then from reduced flavin to the quinone, bypassing the formation of semiquinone and reactive oxygen species. Regulates cellular redox state primarily through quinone detoxification. Reduces components of plasma membrane redox system such as coenzyme Q and vitamin quinones, producing antioxidant hydroquinone forms. In the process may function as superoxide scavenger to prevent hydroquinone oxidation and facilitate excretion. Alternatively, can activate quinones and their derivatives by generating redox reactive hydroquinones with DNA cross-linking antitumor potential. Acts as a gatekeeper of the core 20S proteasome known to degrade proteins with unstructured regions. Upon oxidative stress, interacts with tumor suppressors TP53 and TP73 in a NADH-dependent way and inhibits their ubiquitin-independent degradation by the 20S proteasome. This is NAD(P)H dehydrogenase [quinone] 1 (Nqo1) from Rattus norvegicus (Rat).